The primary structure comprises 575 residues: Chaperonin 60 subunit alpha 2, chloroplastic (575 aa).

Residues 1-18 (MFAVSPSSFSPTTISPRR) show a composition bias toward low complexity. The tract at residues 1-27 (MFAVSPSSFSPTTISPRRSGQRNEPRK) is disordered. A chloroplast-targeting transit peptide spans 1 to 32 (MFAVSPSSFSPTTISPRRSGQRNEPRKFSVVR).

This sequence belongs to the chaperonin (HSP60) family. In terms of assembly, part of the Cpn60 complex composed of 7 alpha and 7 beta subunits.

Its subcellular location is the plastid. It localises to the chloroplast. Involved in protein assisted folding. In Arabidopsis thaliana (Mouse-ear cress), this protein is Chaperonin 60 subunit alpha 2, chloroplastic (CPN60A2).